Consider the following 148-residue polypeptide: 18 kDa antigen (148 aa).

The region spanning 21–131 (TSARPAVMPM…KPRKISVDRG (111 aa)) is the sHSP domain.

Belongs to the small heat shock protein (HSP20) family.

Functionally, not known. This protein is one of the major immune reactive proteins in mycobacteria. This Mycobacterium leprae (strain TN) protein is 18 kDa antigen (hsp18).